A 306-amino-acid chain; its full sequence is D-alanine--D-alanine ligase (306 aa).

One can recognise an ATP-grasp domain in the interval 104 to 303 (KMLWKAFGLP…FEQLVVKILE (200 aa)). Position 134–189 (134–189 (VAKLGLPLMVKPSLEGSSVGLTKVKAVEELKSAVEYALKFDNTILIEEWLAGDELT)) interacts with ATP. Asp257, Glu270, and Asn272 together coordinate Mg(2+).

Belongs to the D-alanine--D-alanine ligase family. The cofactor is Mg(2+). Mn(2+) serves as cofactor.

It localises to the cytoplasm. It catalyses the reaction 2 D-alanine + ATP = D-alanyl-D-alanine + ADP + phosphate + H(+). It functions in the pathway cell wall biogenesis; peptidoglycan biosynthesis. Functionally, cell wall formation. In Haemophilus influenzae (strain PittGG), this protein is D-alanine--D-alanine ligase.